The primary structure comprises 290 residues: Protein-glutamine deamidase Cif (290 aa).

The segment at 1-26 (MKISPNTISPSQSDPRMSTNVSQRSR) is disordered. Active-site residues include Cys-117, His-173, and Gln-193.

It belongs to the Cif family.

Its subcellular location is the secreted. It is found in the host nucleus. The enzyme catalyses L-glutaminyl-[protein] + H2O = L-glutamyl-[protein] + NH4(+). Protein-glutamine deamidase effector that inhibits the host cell cycle and other key cellular processes such as the actin network and programmed-cell death. Acts by mediating the side chain deamidation of 'Gln-40' of host NEDD8, converting it to glutamate, thereby abolishing the activity of cullin-RING-based E3 ubiquitin-protein ligase complexes (CRL complexes). Inactivation of CRL complexes prevents ubiquitination and subsequent degradation of the cyclin-dependent kinase inhibitors CDKN1A/p21 and CDKN1B/p27, leading to G1 and G2 cell cycle arrests in host cells. Also able to catalyze deamidation of 'Gln-40' of host ubiquitin in vitro; however, NEDD8 constitutes the preferred substrate in vivo. This is Protein-glutamine deamidase Cif from Yersinia pseudotuberculosis serotype O:3 (strain YPIII).